Here is a 663-residue protein sequence, read N- to C-terminus: Transketolase 1 (663 aa).

Residue H26 coordinates substrate. K46 is modified (N6-acetyllysine). Thiamine diphosphate-binding positions include H66 and G114 to L116. D155 provides a ligand contact to Mg(2+). The thiamine diphosphate site is built by G156 and N185. Residues N185 and I187 each coordinate Mg(2+). Substrate-binding residues include H261, R358, and S385. H261 lines the thiamine diphosphate pocket. The Proton donor role is filled by E411. Thiamine diphosphate is bound at residue F437. Substrate is bound by residues H461, D469, H473, and R520.

Belongs to the transketolase family. Homodimer. The cofactor is Mg(2+). Ca(2+) serves as cofactor. Requires Mn(2+) as cofactor. Co(2+) is required as a cofactor. It depends on thiamine diphosphate as a cofactor.

The catalysed reaction is D-sedoheptulose 7-phosphate + D-glyceraldehyde 3-phosphate = aldehydo-D-ribose 5-phosphate + D-xylulose 5-phosphate. Functionally, catalyzes the transfer of a two-carbon ketol group from a ketose donor to an aldose acceptor, via a covalent intermediate with the cofactor thiamine pyrophosphate. Thus, catalyzes the reversible transfer of a two-carbon ketol group from sedoheptulose-7-phosphate to glyceraldehyde-3-phosphate, producing xylulose-5-phosphate and ribose-5-phosphate. This is Transketolase 1 (tktA) from Escherichia coli (strain K12).